The primary structure comprises 852 residues: Sarcoplasmic reticulum histidine-rich calcium-binding protein (852 aa).

Residues 1–27 (MGCRGPWLHTCLLWAAVASLLLPPAVT) form the signal peptide. Q28 carries the pyrrolidone carboxylic acid modification. The span at 44–58 (AGAPGPSGEAAAAGL) shows a compositional bias: low complexity. Residues 44-770 (AGAPGPSGEA…EDTGPEDTQE (727 aa)) are disordered. 2 repeat units span residues 59–79 (GHHG…SMEN) and 80–100 (GHHF…SREY). Residues 59 to 100 (GHHGHSHRSPGEENEDVSMENGHHFWSHRDHGETDDEVSREY) form a 2 X approximate tandem repeats region. The span at 79–101 (NGHHFWSHRDHGETDDEVSREYG) shows a compositional bias: basic and acidic residues. S120 is modified (phosphoserine). Positions 146–157 (LAEHGSHGHGHE) are enriched in basic and acidic residues. 12 stretches are compositionally biased toward acidic residues: residues 184-195 (EEGEEEEEEEEV), 208-217 (DEEDEDDDST), 233-246 (EEDE…GDST), 261-275 (EEED…GDST), 291-303 (EEDE…GDST), 319-332 (EEDD…GDST), 348-360 (EEDE…GDST), 376-388 (EEDE…GDST), 404-416 (EEDE…GDST), 432-444 (EEDE…GDST), 459-468 (EEEDEDDDDE), and 484-497 (EDDG…DDST). 10 consecutive repeat copies span residues 199–224 (HRHR…RHQA), 225–253 (HRHR…HHQA), 254–282 (HRHR…RHQA), 283–310 (HRHR…RHQA), 311–339 (HRHR…RHQA), 340–367 (HRHR…RHQA), 368–395 (HRHR…RHQA), 396–423 (HRHR…HHQA), 424–451 (HRHR…RHQA), and 452–470 (HRHR…DEGE). The tract at residues 199–470 (HRHRGHGKED…EDEDDDDEGE (272 aa)) is 10 X tandem repeats, acidic. Residues 471-585 (HHHVPHRGHR…HHVASHPPPG (115 aa)) are 4 X approximate tandem repeats. Residues 509 to 536 (HGKEEAEVTSDEHHHHVPDHGHQGHGDK) are compositionally biased toward basic and acidic residues. S518, S544, and S614 each carry phosphoserine. Basic and acidic residues-rich tracts occupy residues 587 to 619 (RSRE…ERGH), 630 to 646 (PPED…KEEV), and 658 to 681 (DGSR…HHSL). Acidic residues predominate over residues 722 to 733 (EEEEEEEEEEEE). Over residues 746–757 (SGREAAGGASSE) the composition is skewed to low complexity. Acidic residues predominate over residues 758 to 769 (ESAEDTGPEDTQ). Residues 780-826 (CGYCTFCNRCTECEHCHCDEDSMGEHCDQCQHCQFCYLCPLVCETVC) form a metal-binding region.

This sequence belongs to the HRC family. The N-terminus is blocked.

The protein resides in the sarcoplasmic reticulum lumen. May play a role in the regulation of calcium sequestration or release in the SR of skeletal and cardiac muscle. This is Sarcoplasmic reticulum histidine-rich calcium-binding protein (HRC) from Oryctolagus cuniculus (Rabbit).